A 490-amino-acid chain; its full sequence is Glutamyl-tRNA(Gln) amidotransferase subunit A (490 aa).

Active-site charge relay system residues include Lys76 and Ser151. Ser175 functions as the Acyl-ester intermediate in the catalytic mechanism.

It belongs to the amidase family. GatA subfamily. As to quaternary structure, heterotrimer of A, B and C subunits.

The enzyme catalyses L-glutamyl-tRNA(Gln) + L-glutamine + ATP + H2O = L-glutaminyl-tRNA(Gln) + L-glutamate + ADP + phosphate + H(+). Functionally, allows the formation of correctly charged Gln-tRNA(Gln) through the transamidation of misacylated Glu-tRNA(Gln) in organisms which lack glutaminyl-tRNA synthetase. The reaction takes place in the presence of glutamine and ATP through an activated gamma-phospho-Glu-tRNA(Gln). This chain is Glutamyl-tRNA(Gln) amidotransferase subunit A, found in Aromatoleum aromaticum (strain DSM 19018 / LMG 30748 / EbN1) (Azoarcus sp. (strain EbN1)).